A 492-amino-acid polypeptide reads, in one-letter code: N-succinylglutamate 5-semialdehyde dehydrogenase (492 aa).

Glycine 220–glycine 225 is a binding site for NAD(+). Catalysis depends on residues glutamate 243 and cysteine 277.

It belongs to the aldehyde dehydrogenase family. AstD subfamily.

The catalysed reaction is N-succinyl-L-glutamate 5-semialdehyde + NAD(+) + H2O = N-succinyl-L-glutamate + NADH + 2 H(+). It functions in the pathway amino-acid degradation; L-arginine degradation via AST pathway; L-glutamate and succinate from L-arginine: step 4/5. Functionally, catalyzes the NAD-dependent reduction of succinylglutamate semialdehyde into succinylglutamate. The protein is N-succinylglutamate 5-semialdehyde dehydrogenase of Escherichia coli (strain 55989 / EAEC).